Here is a 395-residue protein sequence, read N- to C-terminus: Enolase (395 aa).

Substrate-binding residues include H136 and E145. E188 functions as the Proton donor in the catalytic mechanism. Mg(2+) is bound by residues D223, E271, and D296. Residues E271 and D296 each coordinate substrate. The active-site Proton acceptor is K321. Substrate contacts are provided by residues 348-351 (SHRS) and K372.

It belongs to the enolase family. In terms of assembly, homodimer. It depends on Mg(2+) as a cofactor.

It is found in the cytoplasm. It catalyses the reaction (2R)-2-phosphoglycerate = phosphoenolpyruvate + H2O. It functions in the pathway carbohydrate degradation; glycolysis; pyruvate from D-glyceraldehyde 3-phosphate: step 4/5. The sequence is that of Enolase from Alligator mississippiensis (American alligator).